The following is a 338-amino-acid chain: Holliday junction branch migration complex subunit RuvB (338 aa).

A large ATPase domain (RuvB-L) region spans residues 4–184; the sequence is SDRLVSGKAR…FGISHHLQYY (181 aa). ATP-binding positions include R24, G65, K68, T69, T70, 131-133, R174, Y184, and R221; that span reads EDY. Residue T69 coordinates Mg(2+). The small ATPAse domain (RuvB-S) stretch occupies residues 185 to 255; the sequence is HHDELTQIVM…LADEALELLA (71 aa). The interval 258 to 338 is head domain (RuvB-H); the sequence is HLGFDALDRR…NIEVPDGRNS (81 aa). Positions 294, 313, and 318 each coordinate DNA.

The protein belongs to the RuvB family. As to quaternary structure, homohexamer. Forms an RuvA(8)-RuvB(12)-Holliday junction (HJ) complex. HJ DNA is sandwiched between 2 RuvA tetramers; dsDNA enters through RuvA and exits via RuvB. An RuvB hexamer assembles on each DNA strand where it exits the tetramer. Each RuvB hexamer is contacted by two RuvA subunits (via domain III) on 2 adjacent RuvB subunits; this complex drives branch migration. In the full resolvosome a probable DNA-RuvA(4)-RuvB(12)-RuvC(2) complex forms which resolves the HJ.

Its subcellular location is the cytoplasm. It carries out the reaction ATP + H2O = ADP + phosphate + H(+). Its function is as follows. The RuvA-RuvB-RuvC complex processes Holliday junction (HJ) DNA during genetic recombination and DNA repair, while the RuvA-RuvB complex plays an important role in the rescue of blocked DNA replication forks via replication fork reversal (RFR). RuvA specifically binds to HJ cruciform DNA, conferring on it an open structure. The RuvB hexamer acts as an ATP-dependent pump, pulling dsDNA into and through the RuvAB complex. RuvB forms 2 homohexamers on either side of HJ DNA bound by 1 or 2 RuvA tetramers; 4 subunits per hexamer contact DNA at a time. Coordinated motions by a converter formed by DNA-disengaged RuvB subunits stimulates ATP hydrolysis and nucleotide exchange. Immobilization of the converter enables RuvB to convert the ATP-contained energy into a lever motion, pulling 2 nucleotides of DNA out of the RuvA tetramer per ATP hydrolyzed, thus driving DNA branch migration. The RuvB motors rotate together with the DNA substrate, which together with the progressing nucleotide cycle form the mechanistic basis for DNA recombination by continuous HJ branch migration. Branch migration allows RuvC to scan DNA until it finds its consensus sequence, where it cleaves and resolves cruciform DNA. In Dichelobacter nodosus (strain VCS1703A), this protein is Holliday junction branch migration complex subunit RuvB.